The following is an 839-amino-acid chain: Taste receptor type 1 member 2 (839 aa).

The N-terminal stretch at 1–19 (MGPRAKTISSLFFLLWVLA) is a signal peptide. The Extracellular segment spans residues 20 to 566 (EPAENSDFYL…VFLEWHEAPT (547 aa)). Residues asparagine 84, asparagine 248, asparagine 292, asparagine 312, asparagine 368, asparagine 428, asparagine 487, and asparagine 527 are each glycosylated (N-linked (GlcNAc...) asparagine). A helical membrane pass occupies residues 567–587 (IAVALLAALGFLSTLAILVIF). Over 588–602 (WRHFQTPIVRSAGGP) the chain is Cytoplasmic. Residues 603–623 (MCFLMLTLLLVAYMVVPVYVG) traverse the membrane as a helical segment. The Extracellular portion of the chain corresponds to 624 to 635 (PPKVSTCLCRQA). Residues 636–656 (LFPLCFTICISCIAVRSFQIV) form a helical membrane-spanning segment. Residues 657–681 (CAFKMASRFPRAYSYWVRYQGPYVS) lie on the Cytoplasmic side of the membrane. A helical membrane pass occupies residues 682 to 702 (MAFITVLKMVIVVIGMLATGL). At 703-727 (SPTTRTDPDDPKITIVSCNPNYRNS) the chain is on the extracellular side. The helical transmembrane segment at 728 to 748 (LLFNTSLDLLLSVVGFSFAYM) threads the bilayer. Topologically, residues 749 to 760 (GKELPTNYNEAK) are cytoplasmic. Residues 761–781 (FITLSMTFYFTSSVSLCTFMS) traverse the membrane as a helical segment. At 782–784 (AYS) the chain is on the extracellular side. Residues 785-805 (GVLVTIVDLLVTVLNLLAISL) form a helical membrane-spanning segment. Residues 806–839 (GYFGPKCYMILFYPERNTPAYFNSMIQGYTMRRD) lie on the Cytoplasmic side of the membrane.

This sequence belongs to the G-protein coupled receptor 3 family. TAS1R subfamily. Forms heterodimers with TAS1R3.

Its subcellular location is the cell membrane. Putative taste receptor. TAS1R2/TAS1R3 recognizes diverse natural and synthetic sweeteners. This is Taste receptor type 1 member 2 (TAS1R2) from Homo sapiens (Human).